The chain runs to 306 residues: MPALLKINKKKNGQTKIDRLFSKRRKTSLAIEKNHSKASMCTGQSPLNIISYNVPPLIVLRNKTIRNSIEVLVEEMFRDIQMRQQTNVLVAQCPRMIVETQLIGLFQSNYTSVAEELEQSIRTGDIRRLYLNRSDKFCGESCLILRPEFDKLFTYYLCKFKDQEHIYTLIFKLHKLLIENPLPSYTSEELKFNWEERRLLISMGFLILAGTDSYGISLPNLGIFTHILRNSRNDLSNYLKKRPYREVIESSLYNRNVSVACKKKNEAFFGWKFRLCDAIGAGLVDSFMTTCGRAFRLTKKGLEMKF.

Belongs to the STK19 family.

It catalyses the reaction L-seryl-[protein] + ATP = O-phospho-L-seryl-[protein] + ADP + H(+). The enzyme catalyses L-threonyl-[protein] + ATP = O-phospho-L-threonyl-[protein] + ADP + H(+). Functionally, serine/threonine-protein kinase. Has a role in meiosis. The chain is Serine/threonine-protein kinase mug51 (mug51) from Schizosaccharomyces pombe (strain 972 / ATCC 24843) (Fission yeast).